Here is a 446-residue protein sequence, read N- to C-terminus: Probable rhamnogalacturonase A (446 aa).

The N-terminal stretch at 1–18 is a signal peptide; sequence MPALPILALALAPLLVNG. Cys-39 and Cys-65 form a disulfide bridge. 3 N-linked (GlcNAc...) asparagine glycosylation sites follow: Asn-50, Asn-115, and Asn-124. Catalysis depends on Asp-216, which acts as the Proton donor. The cysteines at positions 218 and 235 are disulfide-linked. 2 N-linked (GlcNAc...) asparagine glycosylation sites follow: Asn-236 and Asn-281. His-291 is an active-site residue. Asn-318 is a glycosylation site (N-linked (GlcNAc...) asparagine). Cystine bridges form between Cys-341–Cys-347 and Cys-369–Cys-378.

The protein belongs to the glycosyl hydrolase 28 family.

It is found in the secreted. The enzyme catalyses Endohydrolysis of alpha-D-GalA-(1-&gt;2)-alpha-L-Rha glycosidic bond in the rhamnogalacturonan I backbone with initial inversion of anomeric configuration releasing oligosaccharides with beta-D-GalA at the reducing end.. Its function is as follows. Pectinolytic enzymes consist of four classes of enzymes: pectine lyase, polygalacturonase, pectin methylesterase and rhamnogalacturonase. Hydrolyzes alpha-D-galacturonopyranosyl-(1,2)-alpha-L-rhamnopyranosyl linkages in the backbone of the hairy regions of pectins. This is Probable rhamnogalacturonase A (rhgA) from Aspergillus niger (strain ATCC MYA-4892 / CBS 513.88 / FGSC A1513).